We begin with the raw amino-acid sequence, 315 residues long: Cobalamin biosynthesis protein CobD (315 aa).

5 helical membrane passes run 48–68 (IAGFFAWLFIVFITFGVTLGI), 77–97 (PILGTVVSGILIYFCISAKGL), 150–170 (DGIIAPLFFAGIGGAPLAFLY), 200–220 (VFNYIPARLTAYLIVISSFIL), and 295–315 (MVSFLGMVVALIIRCILEVII).

This sequence belongs to the CobD/CbiB family.

The protein resides in the cell membrane. The protein operates within cofactor biosynthesis; adenosylcobalamin biosynthesis. Functionally, converts cobyric acid to cobinamide by the addition of aminopropanol on the F carboxylic group. The sequence is that of Cobalamin biosynthesis protein CobD from Clostridium perfringens (strain 13 / Type A).